Consider the following 2113-residue polypeptide: Ninein (2113 aa).

2 EF-hand domains span residues 8–43 (QHEA…LCLE) and 42–77 (LEDV…ILSR). Phosphoserine is present on serine 152. EF-hand domains are found at residues 182-217 (WIEE…YGLQ) and 219-252 (VDGA…TGKS). Position 245–252 (245–252 (GLFKTGKS)) interacts with GTP. Serine 269 bears the Phosphoserine mark. 300–304 (DGMGQ) contributes to the GTP binding site. An EF-hand 5 domain is found at 317 to 352 (EGIENSQEILKALDFSLDGNINLTELTLALENELLV). The stretch at 358 to 570 (HQAALASFKA…YQAQGRVLRL (213 aa)) forms a coiled coil. A GTP-binding site is contributed by 420–423 (RKLD). The interval 578-599 (EELDGHSGGIEPDQGPGSEECN) is disordered. Coiled-coil stretches lie at residues 620–926 (RDLC…ESQH), 958–1008 (EQLA…STEI), 1175–1323 (EDTR…MEKV), and 1425–1806 (AALL…IDKD). An important for interaction with CEP170 region spans residues 798 to 1495 (EMETECNRRV…QDLQITCGEM (698 aa)). 2 positions are modified to phosphoserine: serine 1540 and serine 1826. 2 coiled-coil regions span residues 1852 to 1910 (VQNT…KEQS) and 1971 to 2093 (REQF…IASL). Disordered regions lie at residues 1899–1922 (KREC…MGSL) and 1988–2008 (SQHL…PQGN). Residues 1988–1999 (SQHLQEELENRT) show a composition bias toward basic and acidic residues.

In terms of assembly, homooligomer. Interacts with GSK3B/GSK3-beta via its C-terminal domain. Interacts with C14ORF166, such interaction may prevent its phosphorylation by GSK3B. Interacts with AUNIP (via N-terminus). Identified in a complex with AUNIP and AURKA. Interacts with CCDC120. Interacts (via C-terminus) with CEP250. Interacts with CEP170. Interacts (via N-terminus) with the gamma-tubulin ring complex component TUBGCP3. Interacts with gamma-tubulin. Isoform 4 does not interact with CEP170 or CEP250. Phosphorylated by AURKA/Aurora kinase A and PKA kinases but not CK2 or AURKB/Aurora kinase B. As to expression, widely expressed. Highly expressed in spleen, bone marrow and skin. Weakly expressed in liver and small intestine. Expressed in brain.

It is found in the cytoplasm. The protein resides in the cytoskeleton. The protein localises to the microtubule organizing center. Its subcellular location is the centrosome. It localises to the centriole. Its function is as follows. Centrosomal protein required for the positioning and anchorage of the microtubule minus-end in epithelial cells. May also act as a centrosome maturation factor. May play a role in microtubule nucleation, by recruiting the gamma-tubulin ring complex to the centrosome. Overexpression does not perturb nucleation or elongation of microtubules but suppresses release of microtubules. Required for centriole organization and microtubule anchoring at the mother centriole. This chain is Ninein, found in Mus musculus (Mouse).